A 381-amino-acid chain; its full sequence is Ceropsin (381 aa).

Topologically, residues 1 to 62 (MSISMDAGPG…MNPLWHALLG (62 aa)) are extracellular. The N-linked (GlcNAc...) asparagine glycan is linked to N28. A helical transmembrane segment spans residues 63 to 83 (FTIGVLGFISMMGNGMVIYIF). At 84 to 96 (MTTKNLKTPSNLL) the chain is on the cytoplasmic side. The chain crosses the membrane as a helical span at residues 97 to 117 (VVNLAFSDFLMMCAMSPAMVI). Residues 118–133 (NCYNETWVFGPFACEL) lie on the Extracellular side of the membrane. A glycan (N-linked (GlcNAc...) asparagine) is linked at N121. C131 and C208 are disulfide-bonded. Residues 134 to 154 (YGCAGSLFGCASIWTMTMIAF) traverse the membrane as a helical segment. At 155–173 (DRYNVIVKGIAAKPMTNNG) the chain is on the cytoplasmic side. The chain crosses the membrane as a helical span at residues 174–194 (ALLRILGIWAFSLAWTVAPFF). Over 195-221 (GWNRYVPEGNMTACGTDYLTKDWFSRS) the chain is Extracellular. N-linked (GlcNAc...) asparagine glycosylation is present at N204. The helical transmembrane segment at 222 to 242 (YIVVYSVFVYFAPLLLIVYSY) threads the bilayer. The Cytoplasmic portion of the chain corresponds to 243–284 (YYIVQAVSAHEKAMREQAKKMNVASLRSSEAANTSTECKLAK). The helical transmembrane segment at 285–305 (VALMTISLWFMAWTPYLVINY) threads the bilayer. Over 306–316 (TGILESAPISP) the chain is Extracellular. Residues 317-339 (LATIWGSLFAKANAVYNPIVYGI) traverse the membrane as a helical segment. Over 340–381 (SHPKYQAALYKRFPVLQCHSTTTDEASSVASGTTVMEEKPTA) the chain is Cytoplasmic.

Belongs to the G-protein coupled receptor 1 family. Opsin subfamily. Expressed bilaterally in dorsal and ventral anterior protocerebral cells and bilaterally in the dorsal posterior protocerebral and lateral posterior tritocerebral cells (at protein level). Expressed in the larval brain but not in the subesophageal ganglion or thoracic ganglion.

It is found in the membrane. Visual pigments are the light-absorbing molecules that mediate vision. They consist of an apoprotein, opsin, covalently linked to cis-retinal. May play a role in photoperiodic photoreception. The sequence is that of Ceropsin from Bombyx mori (Silk moth).